The primary structure comprises 326 residues: Aspartate carbamoyltransferase catalytic subunit (326 aa).

Carbamoyl phosphate contacts are provided by Arg65 and Thr66. Lys93 contributes to the L-aspartate binding site. Carbamoyl phosphate-binding residues include Arg115, His143, and Gln146. 2 residues coordinate L-aspartate: Arg176 and Arg230. Residues Gly271 and Pro272 each coordinate carbamoyl phosphate.

The protein belongs to the aspartate/ornithine carbamoyltransferase superfamily. ATCase family. Heterododecamer (2C3:3R2) of six catalytic PyrB chains organized as two trimers (C3), and six regulatory PyrI chains organized as three dimers (R2).

The enzyme catalyses carbamoyl phosphate + L-aspartate = N-carbamoyl-L-aspartate + phosphate + H(+). It participates in pyrimidine metabolism; UMP biosynthesis via de novo pathway; (S)-dihydroorotate from bicarbonate: step 2/3. Its function is as follows. Catalyzes the condensation of carbamoyl phosphate and aspartate to form carbamoyl aspartate and inorganic phosphate, the committed step in the de novo pyrimidine nucleotide biosynthesis pathway. This Mesorhizobium japonicum (strain LMG 29417 / CECT 9101 / MAFF 303099) (Mesorhizobium loti (strain MAFF 303099)) protein is Aspartate carbamoyltransferase catalytic subunit.